The primary structure comprises 198 residues: Recombination protein RecR (198 aa).

Residues 58-73 (CSVCGNYTDTDPCAIC) form a C4-type zinc finger. Positions 81–175 (SLVCVVEEPK…KVTRIAHGIP (95 aa)) constitute a Toprim domain.

It belongs to the RecR family.

Its function is as follows. May play a role in DNA repair. It seems to be involved in an RecBC-independent recombinational process of DNA repair. It may act with RecF and RecO. This Clostridium acetobutylicum (strain ATCC 824 / DSM 792 / JCM 1419 / IAM 19013 / LMG 5710 / NBRC 13948 / NRRL B-527 / VKM B-1787 / 2291 / W) protein is Recombination protein RecR.